A 507-amino-acid chain; its full sequence is (6-4) photolyase (507 aa).

6,7-dimethyl-8-(1-D-ribityl)lumazine is bound by residues 9-10 (GD), 32-40 (CEVMAEASY), and Gly-105. FAD contacts are provided by residues 265–269 (HSLLS) and Asn-273. Residue Cys-350 coordinates [4Fe-4S] cluster. Residues 363–366 (YAHH), Asp-397, and Asn-406 each bind FAD. [4Fe-4S] cluster contacts are provided by Cys-438, Cys-441, and Cys-454.

Belongs to the iron-sulfur bacterial cryptochrome/photolyase (FeS-BCP) family. It depends on FAD as a cofactor. 6,7-dimethyl-8-(1-D-ribityl)lumazine serves as cofactor. Requires [4Fe-4S] cluster as cofactor.

The catalysed reaction is (6-4) photoproduct (in DNA) = 2 pyrimidine residues (in DNA).. In terms of biological role, photolyase involved in the repair of UV-induced (6-4) lesions in DNA. Catalyzes the photoreactivation of (6-4) pyrimidine-pyrimidone photoproducts by using blue-light energy. Can repair (6-4) photoproducts in ssDNA as well as in dsDNA. This Agrobacterium fabrum (strain C58 / ATCC 33970) (Agrobacterium tumefaciens (strain C58)) protein is (6-4) photolyase.